The following is a 26-amino-acid chain: Dermaseptin-J1 (26 aa).

Residue Val26 is modified to Valine amide.

As to expression, expressed by the skin glands.

It is found in the secreted. In terms of biological role, has antimicrobial activity. This is Dermaseptin-J1 from Phasmahyla jandaia (Jandaia leaf frog).